A 525-amino-acid polypeptide reads, in one-letter code: GMP synthase [glutamine-hydrolyzing] (525 aa).

The Glutamine amidotransferase type-1 domain occupies 16-205 (PVLVVDFGAQ…LHDFAGLGAQ (190 aa)). The active-site Nucleophile is C93. Catalysis depends on residues H179 and E181. The 194-residue stretch at 206 to 399 (WTPANIANAL…LGLPEEIVAR (194 aa)) folds into the GMPS ATP-PPase domain. An ATP-binding site is contributed by 233-239 (SGGVDSA).

As to quaternary structure, homodimer.

It catalyses the reaction XMP + L-glutamine + ATP + H2O = GMP + L-glutamate + AMP + diphosphate + 2 H(+). It functions in the pathway purine metabolism; GMP biosynthesis; GMP from XMP (L-Gln route): step 1/1. Functionally, catalyzes the synthesis of GMP from XMP. The sequence is that of GMP synthase [glutamine-hydrolyzing] from Mycobacterium bovis (strain BCG / Pasteur 1173P2).